Here is a 133-residue protein sequence, read N- to C-terminus: Protein archease (133 aa).

Positions 11, 132, and 133 each coordinate Ca(2+).

Belongs to the archease family.

In terms of biological role, activates the tRNA-splicing ligase complex by facilitating the enzymatic turnover of catalytic subunit RtcB. Acts by promoting the guanylylation of RtcB, a key intermediate step in tRNA ligation. Can also alter the NTP specificity of RtcB such that ATP, dGTP or ITP is used efficiently. This chain is Protein archease, found in Thermoplasma volcanium (strain ATCC 51530 / DSM 4299 / JCM 9571 / NBRC 15438 / GSS1).